A 421-amino-acid chain; its full sequence is Hydrolyase poxO (421 aa).

Ser239 (nucleophile) is an active-site residue.

It belongs to the AB hydrolase superfamily. FUS2 hydrolase family. Homodimer.

It functions in the pathway secondary metabolite biosynthesis. Hydrolyase; part of the gene cluster that mediates the biosynthesis of oxaleimides, cytotoxic compounds containing an unusual disubstituted succinimide moiety. The first step of the pathway is provided by the HR-PKS poxF that serves in a new mode of collaborative biosynthesis with the PKS-NRPS poxE, by providing the olefin containing amino acid substrate via the synthesis of an ACP-bound dec-4-enoate. The cytochrome P450 monooxygenase poxM-catalyzed oxidation at the alpha-position creates the enzyme-bound 2-hydroxydec-4-enoyl-ACP thioester, which may be prone to spontaneous hydrolysis to yield 2-hydroxydec-4-enoic acid due to increased electrophilicity of the carbonyl. 2-hydroxydec-4-enoic acid can then be further oxidized by poxM to yield the alpha-ketoacid 2-oxodec-4-enoicacid, which is reductively aminated by the aminotransferase poxL to yield (S,E)-2-aminodec-4-enoic acid. The Hybrid PKS-NRPS synthetase poxE then performs condensation between the octaketide product of its PKS modules and the amino group of (S,E)-2-aminodec-4-enoic acid which is activated and incorporated by the adenylation domain. The resulting aminoacyl product can be cyclized by the Diels-Alderase PoxQ and reductively released by the reductive (R) domain of poxE to yield an aldehyde intermediate. The released aldehyde is then substrate for a Knoevenagel condensation by the hydrolyase poxO followed by an oxidation at the 5-position of the pyrrolidone ring. The presence of the olefin from the amino acid building block allows for migration of the substituted allyl group to occur. This allylic transposition reaction takes place in a conjugate addition, semipinacol-like fashion to yield a succinimide intermediate. Iterative two-electron oxidations of the C7 methyl of the succinimide intermediate to the carboxylic acid can be catalyzed by one of two remaining cytochrome P450 monooxygenasess poxC or poxD to yield oxaleimide A. Subsequent oxidation yields the maleimide scaffold oxaleimide I. Both oxaleimide A and oxaleimide I can undergo oxidative modifications in the decalin ring to yield the series of products oxaleimides B to H. This chain is Hydrolyase poxO, found in Penicillium oxalicum.